A 226-amino-acid polypeptide reads, in one-letter code: 26S proteasome non-ATPase regulatory subunit 10 (226 aa).

Positions 1–37 are required for nuclear localization; it reads MEGCVSNLMVCNLAYSGKLEELKESILADKSLATRTD. Residues 1-71 form an interaction with RB1 region; sequence MEGCVSNLMV…LGVPVNDKDD (71 aa). ANK repeat units lie at residues 3 to 36, 37 to 69, 70 to 102, 103 to 135, 136 to 168, 169 to 201, and 202 to 226; these read GCVS…ATRT, DQDS…VNDK, DDAG…VNAV, NQNG…PDAK, DHYE…TNIQ, DTEG…IYIE, and NKEE…MVEG. The interaction with RELA stretch occupies residues 39 to 226; that stretch reads DSRTALHWAC…GLILKRMVEG (188 aa). Residues 171–226 are interaction with RB1; it reads EGNTPLHLACDEERVEEAKLLVSQGASIYIENKEEKTPLQVAKGGLGLILKRMVEG.

Part of transient complex containing PSMD10, PSMC4, PSMC5 and PAAF1 formed during the assembly of the 26S proteasome. Stays associated throughout the assembly of the PA700/19S RC and is released upon association with the 20S core. Interacts with PSMC4. Interacts with RB1. Interacts with CDK4. Interacts with MDM2. Interacts with RELA. Associates with a CDK4:CCND2 serine/threonine kinase complex. Interacts with ARHGDIA and increases the interaction between ARHGDIA and RHOA, hence promotes ARHGDIA inactivation of RHOA and ROCK. In terms of tissue distribution, tends to be up-regulated in cancer cells with RAS mutations, including lung cancers and adenocarconimas (at protein level).

The protein resides in the cytoplasm. Its subcellular location is the nucleus. Functionally, acts as a chaperone during the assembly of the 26S proteasome, specifically of the PA700/19S regulatory complex (RC). In the initial step of the base subcomplex assembly is part of an intermediate PSMD10:PSMC4:PSMC5:PAAF1 module which probably assembles with a PSMD5:PSMC2:PSMC1:PSMD2 module. Independently of the proteasome, regulates EGF-induced AKT activation through inhibition of the RHOA/ROCK/PTEN pathway, leading to prolonged AKT activation. Plays an important role in RAS-induced tumorigenesis. In terms of biological role, acts as an proto-oncoprotein by being involved in negative regulation of tumor suppressors RB1 and p53/TP53. Overexpression is leading to phosphorylation of RB1 and proteasomal degradation of RB1. Regulates CDK4-mediated phosphorylation of RB1 by competing with CDKN2A for binding with CDK4. Facilitates binding of MDM2 to p53/TP53 and the mono- and polyubiquitination of p53/TP53 by MDM2 suggesting a function in targeting the TP53:MDM2 complex to the 26S proteasome. Involved in p53-independent apoptosis. Involved in regulation of NF-kappa-B by retaining it in the cytoplasm. Binds to the NF-kappa-B component RELA and accelerates its XPO1/CRM1-mediated nuclear export. The sequence is that of 26S proteasome non-ATPase regulatory subunit 10 (PSMD10) from Homo sapiens (Human).